A 321-amino-acid chain; its full sequence is Tetraacyldisaccharide 4'-kinase (321 aa).

54 to 61 contributes to the ATP binding site; it reads SVGGTGKT.

It belongs to the LpxK family.

It catalyses the reaction a lipid A disaccharide + ATP = a lipid IVA + ADP + H(+). It participates in glycolipid biosynthesis; lipid IV(A) biosynthesis; lipid IV(A) from (3R)-3-hydroxytetradecanoyl-[acyl-carrier-protein] and UDP-N-acetyl-alpha-D-glucosamine: step 6/6. Its function is as follows. Transfers the gamma-phosphate of ATP to the 4'-position of a tetraacyldisaccharide 1-phosphate intermediate (termed DS-1-P) to form tetraacyldisaccharide 1,4'-bis-phosphate (lipid IVA). In Rickettsia peacockii (strain Rustic), this protein is Tetraacyldisaccharide 4'-kinase.